We begin with the raw amino-acid sequence, 125 residues long: Large ribosomal subunit protein uL22 (125 aa).

This sequence belongs to the universal ribosomal protein uL22 family. As to quaternary structure, part of the 50S ribosomal subunit.

In terms of biological role, this protein binds specifically to 23S rRNA; its binding is stimulated by other ribosomal proteins, e.g. L4, L17, and L20. It is important during the early stages of 50S assembly. It makes multiple contacts with different domains of the 23S rRNA in the assembled 50S subunit and ribosome. The globular domain of the protein is located near the polypeptide exit tunnel on the outside of the subunit, while an extended beta-hairpin is found that lines the wall of the exit tunnel in the center of the 70S ribosome. The protein is Large ribosomal subunit protein uL22 of Thermobifida fusca (strain YX).